A 241-amino-acid chain; its full sequence is Small ribosomal subunit protein uS2 (241 aa).

The protein belongs to the universal ribosomal protein uS2 family.

The chain is Small ribosomal subunit protein uS2 from Enterobacter sp. (strain 638).